The following is a 276-amino-acid chain: Rhomboid protease GlpG (276 aa).

A run of 6 helical transmembrane segments spans residues 94-114, 142-162, 169-189, 192-212, 229-249, and 250-270; these read GPVT…MQIL, ALMH…WYLG, LGSG…GYVQ, FSGP…GYVW, LIIF…GMSM, and ANGA…VDSL. Residue Ser201 is the Nucleophile of the active site. Residue His254 is part of the active site.

Belongs to the peptidase S54 family.

The protein resides in the cell inner membrane. The catalysed reaction is Cleaves type-1 transmembrane domains using a catalytic dyad composed of serine and histidine that are contributed by different transmembrane domains.. Functionally, rhomboid-type serine protease that catalyzes intramembrane proteolysis. In Shigella boydii serotype 4 (strain Sb227), this protein is Rhomboid protease GlpG.